Reading from the N-terminus, the 155-residue chain is RNA pyrophosphohydrolase (155 aa).

In terms of domain architecture, Nudix hydrolase spans 6–148 (GYRANVAIVL…KQEVYRKALT (143 aa)). The short motif at 38-59 (GGVATGETPLQAMYRELHEEIG) is the Nudix box element.

This sequence belongs to the Nudix hydrolase family. RppH subfamily. It depends on a divalent metal cation as a cofactor.

Accelerates the degradation of transcripts by removing pyrophosphate from the 5'-end of triphosphorylated RNA, leading to a more labile monophosphorylated state that can stimulate subsequent ribonuclease cleavage. The chain is RNA pyrophosphohydrolase from Francisella tularensis subsp. tularensis (strain FSC 198).